The chain runs to 94 residues: Large ribosomal subunit protein eL43B (94 aa).

The C4-type zinc-finger motif lies at 39 to 62; it reads CPFCGRLTVKRTAAGIWKCSGKGC.

Belongs to the eukaryotic ribosomal protein eL43 family. In terms of assembly, component of the large ribosomal subunit (LSU). Mature yeast ribosomes consist of a small (40S) and a large (60S) subunit. The 40S small subunit contains 1 molecule of ribosomal RNA (18S rRNA) and at least 33 different proteins. The large 60S subunit contains 3 rRNA molecules (25S, 5.8S and 5S rRNA) and at least 46 different proteins.

The protein resides in the cytoplasm. Component of the ribosome, a large ribonucleoprotein complex responsible for the synthesis of proteins in the cell. The small ribosomal subunit (SSU) binds messenger RNAs (mRNAs) and translates the encoded message by selecting cognate aminoacyl-transfer RNA (tRNA) molecules. The large subunit (LSU) contains the ribosomal catalytic site termed the peptidyl transferase center (PTC), which catalyzes the formation of peptide bonds, thereby polymerizing the amino acids delivered by tRNAs into a polypeptide chain. The nascent polypeptides leave the ribosome through a tunnel in the LSU and interact with protein factors that function in enzymatic processing, targeting, and the membrane insertion of nascent chains at the exit of the ribosomal tunnel. The chain is Large ribosomal subunit protein eL43B (rpl4302) from Schizosaccharomyces pombe (strain 972 / ATCC 24843) (Fission yeast).